A 188-amino-acid polypeptide reads, in one-letter code: Grand meiotic recombination cluster protein 2 (188 aa).

2 stretches are compositionally biased toward polar residues: residues 1–13 (MSDT…QSSE) and 21–31 (ERTNSLKSPDV). The tract at residues 1 to 31 (MSDTTEVPRQSSENDQDNNLERTNSLKSPDV) is disordered.

Functionally, probable transcriptional activator involved in meiotic prophase and synaptonemal complex (SC) assembly. In Saccharomyces cerevisiae (strain ATCC 204508 / S288c) (Baker's yeast), this protein is Grand meiotic recombination cluster protein 2 (GMC2).